Reading from the N-terminus, the 181-residue chain is MGNVFEKLFKSLFGKKEMRILMVGLDAAGKTTILYKLKLGEIVTTIPTIGFNVETVEYKNISFTVWDVGGQDKIRPLWRHYFQNTQGLIFVVDSNDRERVNEAREELTRMLAEDELRDAVLLVFVNKQDLPNAMNAAEITDKLGLHSLRQRNWYIQATCATSGDGLYEGLDWLSNQLKNQK.

G2 carries N-myristoyl glycine lipidation. GTP is bound by residues 24–31 (GLDAAGKT), 67–71 (DVGGQ), and 126–129 (NKQD).

This sequence belongs to the small GTPase superfamily. Arf family.

It localises to the golgi apparatus. Its function is as follows. GTP-binding protein that functions as an allosteric activator of the cholera toxin catalytic subunit, an ADP-ribosyltransferase. Involved in protein trafficking; may modulate vesicle budding and uncoating within the Golgi apparatus. The protein is ADP-ribosylation factor 2 (ARF2) of Bos taurus (Bovine).